The chain runs to 507 residues: ATP synthase subunit alpha (507 aa).

An ATP-binding site is contributed by 169-176; the sequence is GDRQTGKT.

The protein belongs to the ATPase alpha/beta chains family. As to quaternary structure, F-type ATPases have 2 components, CF(1) - the catalytic core - and CF(0) - the membrane proton channel. CF(1) has five subunits: alpha(3), beta(3), gamma(1), delta(1), epsilon(1). CF(0) has three main subunits: a(1), b(2) and c(9-12). The alpha and beta chains form an alternating ring which encloses part of the gamma chain. CF(1) is attached to CF(0) by a central stalk formed by the gamma and epsilon chains, while a peripheral stalk is formed by the delta and b chains.

The protein resides in the cell membrane. The enzyme catalyses ATP + H2O + 4 H(+)(in) = ADP + phosphate + 5 H(+)(out). Its function is as follows. Produces ATP from ADP in the presence of a proton gradient across the membrane. The alpha chain is a regulatory subunit. The protein is ATP synthase subunit alpha of Desulforudis audaxviator (strain MP104C).